A 399-amino-acid polypeptide reads, in one-letter code: Phosphatidate cytidylyltransferase 5, chloroplastic (399 aa).

The N-terminal 26 residues, 1–26 (MAPFVEVCRYKPLPLSLSSLCTCPCR), are a transit peptide targeting the chloroplast. 6 consecutive transmembrane segments (helical) span residues 123–143 (VGGI…AAVL), 187–207 (FGHI…ALLL), 217–237 (LSST…WVKL), 266–286 (VGLV…TFAF), 309–329 (AFAG…SLSW), and 333–353 (LVST…GDLT).

This sequence belongs to the CDS family. Mg(2+) is required as a cofactor.

The protein localises to the plastid. The protein resides in the chloroplast membrane. The enzyme catalyses a 1,2-diacyl-sn-glycero-3-phosphate + CTP + H(+) = a CDP-1,2-diacyl-sn-glycerol + diphosphate. Its pathway is phospholipid metabolism; CDP-diacylglycerol biosynthesis; CDP-diacylglycerol from sn-glycerol 3-phosphate: step 3/3. Highest activities is obtained at about 30 mM CTP and 2 mM phosphatidic acid (PA). In terms of biological role, may be involved in the synthesis of minor phospholipids and in modulation of IP3-mediated signal transduction. Promotes the biosynthesis of plastidial phosphatidylglycerol (PG) which is required for structure and function of thylakoid membranes and, hence, for photoautotrophic growth. The protein is Phosphatidate cytidylyltransferase 5, chloroplastic of Arabidopsis thaliana (Mouse-ear cress).